Consider the following 323-residue polypeptide: GTP 3',8-cyclase (323 aa).

The 225-residue stretch at 4–228 (KYGRSIDYLR…VPVNIQNNGP (225 aa)) folds into the Radical SAM core domain. Arg13 contacts GTP. [4Fe-4S] cluster is bound by residues Cys20 and Cys24. Tyr26 is a binding site for S-adenosyl-L-methionine. [4Fe-4S] cluster is bound at residue Cys27. Arg63 contacts GTP. Gly67 contacts S-adenosyl-L-methionine. Thr94 is a binding site for GTP. Ser118 contacts S-adenosyl-L-methionine. GTP is bound at residue Lys155. Met189 lines the S-adenosyl-L-methionine pocket. [4Fe-4S] cluster-binding residues include Cys252 and Cys255. 257 to 259 (RMR) is a GTP binding site. A [4Fe-4S] cluster-binding site is contributed by Cys269.

It belongs to the radical SAM superfamily. MoaA family. In terms of assembly, monomer and homodimer. [4Fe-4S] cluster is required as a cofactor.

The enzyme catalyses GTP + AH2 + S-adenosyl-L-methionine = (8S)-3',8-cyclo-7,8-dihydroguanosine 5'-triphosphate + 5'-deoxyadenosine + L-methionine + A + H(+). It functions in the pathway cofactor biosynthesis; molybdopterin biosynthesis. Its function is as follows. Catalyzes the cyclization of GTP to (8S)-3',8-cyclo-7,8-dihydroguanosine 5'-triphosphate. This chain is GTP 3',8-cyclase, found in Petrotoga mobilis (strain DSM 10674 / SJ95).